Consider the following 407-residue polypeptide: uncharacterized protein (407 aa).

This is an uncharacterized protein from Mycobacterium bovis (strain ATCC BAA-935 / AF2122/97).